The primary structure comprises 494 residues: Ribose import ATP-binding protein RbsA (494 aa).

2 ABC transporter domains span residues 2-239 (IDMR…VGRQ) and 251-493 (IGEE…TGGN). Residue 34-41 (GENGAGKS) participates in ATP binding.

Belongs to the ABC transporter superfamily. Ribose importer (TC 3.A.1.2.1) family. In terms of assembly, the complex is composed of an ATP-binding protein (RbsA), two transmembrane proteins (RbsC) and a solute-binding protein (RbsB).

The protein resides in the cell membrane. The enzyme catalyses D-ribose(out) + ATP + H2O = D-ribose(in) + ADP + phosphate + H(+). Part of the ABC transporter complex RbsABC involved in ribose import. Responsible for energy coupling to the transport system. This Geobacillus kaustophilus (strain HTA426) protein is Ribose import ATP-binding protein RbsA.